Consider the following 130-residue polypeptide: Small ribosomal subunit protein uS11 (130 aa).

It belongs to the universal ribosomal protein uS11 family. Part of the 30S ribosomal subunit. Interacts with proteins S7 and S18. Binds to IF-3.

Located on the platform of the 30S subunit, it bridges several disparate RNA helices of the 16S rRNA. Forms part of the Shine-Dalgarno cleft in the 70S ribosome. The protein is Small ribosomal subunit protein uS11 of Xanthomonas oryzae pv. oryzae (strain MAFF 311018).